The chain runs to 435 residues: Nuclear receptor subfamily 6 group A member 1 (435 aa).

Positions 11–86 (QRACLICGDR…MGMNRKAIRE (76 aa)) form a DNA-binding region, nuclear receptor. NR C4-type zinc fingers lie at residues 14–34 (CLIC…CEGC) and 50–69 (CSRD…CQYC). The interval 84–157 (IREDGMPGGR…VSTPSSSRSM (74 aa)) is disordered. Polar residues predominate over residues 121–141 (NTSWSNNGDSDHSSPGNGVSE). Low complexity predominate over residues 142–156 (SNQPSPVSTPSSSRS). An NR LBD domain is found at 204 to 435 (QSHTLINQLL…HSCKTSLTKE (232 aa)).

Belongs to the nuclear hormone receptor family. NR6 subfamily. Homodimer.

Its subcellular location is the cytoplasm. It is found in the nucleus. Probable orphan nuclear receptor. Binds to a response element containing repeats of the motif 5'-AGGTCA-3'. Required for anterior-posterior patterning during organogenesis. Acts with chordin to play a role in patterning the midbrain-hindbrain. Isoform Em is required for integrin-mediated cell matrix interaction during neurulation and for the morphogenetic movements leading to formation of the neural tube. Also mediates the effect of retinoic acid on primary neurogenesis. The chain is Nuclear receptor subfamily 6 group A member 1 from Xenopus tropicalis (Western clawed frog).